A 77-amino-acid chain; its full sequence is Putative ankyrin repeat protein RC0956 (77 aa).

One copy of the ANK repeat lies at 8–38; that stretch reads TDISPLMLASEYGQVTIVKYLLKHGNYNVKG.

This chain is Putative ankyrin repeat protein RC0956, found in Rickettsia conorii (strain ATCC VR-613 / Malish 7).